A 256-amino-acid polypeptide reads, in one-letter code: Imidazole glycerol phosphate synthase subunit HisF (256 aa).

Active-site residues include aspartate 12 and aspartate 131.

This sequence belongs to the HisA/HisF family. In terms of assembly, heterodimer of HisH and HisF.

It localises to the cytoplasm. It carries out the reaction 5-[(5-phospho-1-deoxy-D-ribulos-1-ylimino)methylamino]-1-(5-phospho-beta-D-ribosyl)imidazole-4-carboxamide + L-glutamine = D-erythro-1-(imidazol-4-yl)glycerol 3-phosphate + 5-amino-1-(5-phospho-beta-D-ribosyl)imidazole-4-carboxamide + L-glutamate + H(+). Its pathway is amino-acid biosynthesis; L-histidine biosynthesis; L-histidine from 5-phospho-alpha-D-ribose 1-diphosphate: step 5/9. In terms of biological role, IGPS catalyzes the conversion of PRFAR and glutamine to IGP, AICAR and glutamate. The HisF subunit catalyzes the cyclization activity that produces IGP and AICAR from PRFAR using the ammonia provided by the HisH subunit. The protein is Imidazole glycerol phosphate synthase subunit HisF of Azotobacter vinelandii (strain DJ / ATCC BAA-1303).